We begin with the raw amino-acid sequence, 680 residues long: DNA-directed RNA polymerase subunit beta' (680 aa).

Residues Cys-69, Cys-71, Cys-87, and Cys-90 each contribute to the Zn(2+) site. Asp-489, Asp-491, and Asp-493 together coordinate Mg(2+).

Belongs to the RNA polymerase beta' chain family. RpoC1 subfamily. In plastids the minimal PEP RNA polymerase catalytic core is composed of four subunits: alpha, beta, beta', and beta''. When a (nuclear-encoded) sigma factor is associated with the core the holoenzyme is formed, which can initiate transcription. Mg(2+) serves as cofactor. Zn(2+) is required as a cofactor.

The protein localises to the plastid. It is found in the chloroplast. It catalyses the reaction RNA(n) + a ribonucleoside 5'-triphosphate = RNA(n+1) + diphosphate. Functionally, DNA-dependent RNA polymerase catalyzes the transcription of DNA into RNA using the four ribonucleoside triphosphates as substrates. The polypeptide is DNA-directed RNA polymerase subunit beta' (Amborella trichopoda).